A 267-amino-acid chain; its full sequence is Alpha-tubulin N-acetyltransferase (267 aa).

The region spanning 1–197 (MDFRAGLENV…NNFVVYSEFF (197 aa)) is the N-acetyltransferase domain. Acetyl-CoA is bound by residues 131–144 (FYIH…GYGK) and 167–176 (SMKMIQFLHK).

The protein belongs to the acetyltransferase ATAT1 family.

The catalysed reaction is L-lysyl-[alpha-tubulin] + acetyl-CoA = N(6)-acetyl-L-lysyl-[alpha-tubulin] + CoA + H(+). Specifically acetylates 'Lys-40' in alpha-tubulin on the lumenal side of microtubules. Promotes microtubule destabilization and accelerates microtubule dynamics; this activity may be independent of acetylation activity. Acetylates alpha-tubulin with a slow enzymatic rate, due to a catalytic site that is not optimized for acetyl transfer. Enters the microtubule through each end and diffuses quickly throughout the lumen of microtubules. Acetylates only long/old microtubules because of its slow acetylation rate since it does not have time to act on dynamically unstable microtubules before the enzyme is released. This is Alpha-tubulin N-acetyltransferase from Schistosoma japonicum (Blood fluke).